The following is a 233-amino-acid chain: Uridylate kinase (233 aa).

9–10 contributes to the ATP binding site; that stretch reads GS. A UMP-binding site is contributed by G43. Residues G44 and R48 each contribute to the ATP site. UMP is bound by residues D65 and 113–119; that span reads VTPGQTT. T139, Y145, and D148 together coordinate ATP.

It belongs to the UMP kinase family. Homohexamer.

The protein localises to the cytoplasm. It catalyses the reaction UMP + ATP = UDP + ADP. It functions in the pathway pyrimidine metabolism; CTP biosynthesis via de novo pathway; UDP from UMP (UMPK route): step 1/1. With respect to regulation, inhibited by UTP. Functionally, catalyzes the reversible phosphorylation of UMP to UDP. This Methanosarcina mazei (strain ATCC BAA-159 / DSM 3647 / Goe1 / Go1 / JCM 11833 / OCM 88) (Methanosarcina frisia) protein is Uridylate kinase.